Here is a 98-residue protein sequence, read N- to C-terminus: Small ribosomal subunit protein bS20 (98 aa).

The protein belongs to the bacterial ribosomal protein bS20 family.

Binds directly to 16S ribosomal RNA. The chain is Small ribosomal subunit protein bS20 from Synechococcus sp. (strain CC9902).